Reading from the N-terminus, the 270-residue chain is Protein-ADP-ribose hydrolase (270 aa).

Residues 73-267 (VSVKDCQKTN…LYDTYLQKEN (195 aa)) enclose the Macro domain. Residues D92, I93, and N106 each coordinate ADP-D-ribose. 3 residues coordinate Zn(2+): C112, H117, and C119. C119, I120, D121, S212, T213, G214, E215, and F216 together coordinate ADP-D-ribose.

The protein belongs to the MacroD-type family. Zn-Macro subfamily. It depends on Zn(2+) as a cofactor.

It carries out the reaction 4-O-(ADP-D-ribosyl)-L-aspartyl-[protein] + H2O = L-aspartyl-[protein] + ADP-D-ribose + H(+). Functionally, ADP-ribosylhydrolase that specifically reverses the SirTM-mediated mono-ADP-ribosylation at an asparatate residue of GcvH-L, by releasing ADP-ribose from the target protein. May play a role in the regulation of the response to host-induced oxidative stress. This is Protein-ADP-ribose hydrolase from Streptococcus pyogenes serotype M6 (strain ATCC BAA-946 / MGAS10394).